The chain runs to 1109 residues: Myosin ID heavy chain (1109 aa).

The region spanning 7 to 687 (HGVDDMVMLS…TVFNLEELRE (681 aa)) is the Myosin motor domain. 101 to 108 (GESGAGKT) provides a ligand contact to ATP. An actin-binding region spans residues 564-586 (IGALVKALSACTPHYIRCIKPNG). The region spanning 725 to 919 (KERRRLSIER…VSTPSDGLPA (195 aa)) is the TH1 domain. The SH3 domain occupies 958–1017 (NVKPSAKALYDFDAESSMELSFKEGDILTVLDQSSGDWWDAELKGRRGKVPSNYLQLIKN). The segment at 1017–1109 (NAAPPRAGGP…APRGGMAPRV (93 aa)) is disordered. Residues 1030–1043 (TGNRAPTTTTTSGG) show a composition bias toward low complexity.

This sequence belongs to the TRAFAC class myosin-kinesin ATPase superfamily. Myosin family. Myosin I heavy chain is single-headed. Dimer of a heavy and a light chain. Inability to self-assemble into filaments.

The protein resides in the cell projection. Its subcellular location is the pseudopodium. It localises to the cytoplasm. It is found in the cell cortex. Myosin is a protein that binds to actin and has ATPase activity that is activated by actin. Myosin id may have a role in chemotaxis and aggregation; it could serve to stabilize and even retract cortical structures, such as pseudopods and lamellopods. Involved in the process of phagocytosis. The polypeptide is Myosin ID heavy chain (myoD) (Dictyostelium discoideum (Social amoeba)).